Here is a 228-residue protein sequence, read N- to C-terminus: CD302 antigen (228 aa).

An N-terminal signal peptide occupies residues 1 to 20; sequence MPHAALSSLVLLSLATAIFA. Residues 21-165 lie on the Extracellular side of the membrane; the sequence is DCPSSIWVQF…YDKKYLSDNH (145 aa). The C-type lectin domain occupies 30 to 149; the sequence is FQGSCYTFLQ…CEMSSVTGTL (120 aa). A glycan (N-linked (GlcNAc...) asparagine) is linked at Asn-107. A disulfide bond links Cys-125 and Cys-140. Residues 166–186 form a helical membrane-spanning segment; sequence ILISTLVIASTVTLAVLGAVI. Residues 187-228 lie on the Cytoplasmic side of the membrane; the sequence is WFLYRRSARSGFTSFSPAPQSPYSDGCALVVSEEDEYSVQLD.

It localises to the membrane. The protein resides in the cell projection. Its subcellular location is the filopodium. It is found in the cytoplasm. The protein localises to the cell cortex. It localises to the microvillus. In terms of biological role, potential multifunctional C-type lectin receptor that may play roles in endocytosis and phagocytosis as well as in cell adhesion and migration. This Rattus norvegicus (Rat) protein is CD302 antigen (Cd302).